Reading from the N-terminus, the 124-residue chain is Small ribosomal subunit protein uS12c (124 aa).

The segment at 1 to 28 (MPTFQQLVRSARKPHAKKTKSPALQGCP) is disordered. Positions 10–20 (SARKPHAKKTK) are enriched in basic residues.

Belongs to the universal ribosomal protein uS12 family. In terms of assembly, part of the 30S ribosomal subunit.

It localises to the plastid. Functionally, with S4 and S5 plays an important role in translational accuracy. Located at the interface of the 30S and 50S subunits. The sequence is that of Small ribosomal subunit protein uS12c (rps12) from Prototheca wickerhamii.